The primary structure comprises 119 residues: MNLDQYLPVLLFILVGIGVGVVPLVLGYVLGPNRPDAAKNSPYECGFEAFEDARMKFDVRYYLVAILFILFDLEIAFLFPWAVALHEVGMTGFVAVIVFLAILVVGFAYEWKKGALDWE.

3 helical membrane-spanning segments follow: residues 9–29 (VLLF…LGYV), 63–83 (LVAI…PWAV), and 88–108 (VGMT…VGFA).

It belongs to the complex I subunit 3 family. As to quaternary structure, NDH-1 is composed of 14 different subunits. Subunits NuoA, H, J, K, L, M, N constitute the membrane sector of the complex.

It localises to the cell inner membrane. The catalysed reaction is a quinone + NADH + 5 H(+)(in) = a quinol + NAD(+) + 4 H(+)(out). Functionally, NDH-1 shuttles electrons from NADH, via FMN and iron-sulfur (Fe-S) centers, to quinones in the respiratory chain. The immediate electron acceptor for the enzyme in this species is believed to be ubiquinone. Couples the redox reaction to proton translocation (for every two electrons transferred, four hydrogen ions are translocated across the cytoplasmic membrane), and thus conserves the redox energy in a proton gradient. In Paracidovorax citrulli (strain AAC00-1) (Acidovorax citrulli), this protein is NADH-quinone oxidoreductase subunit A.